A 92-amino-acid chain; its full sequence is MTRSLKKGPNVADHLLKKIENLNSQGEKRVIVTWSRGSTIVPAMIGHTIAVYNGREHLPIFVTDLMVGHKLGEFSPTRTFRGHAKSDKKSRR.

Belongs to the universal ribosomal protein uS19 family.

The protein localises to the plastid. The protein resides in the chloroplast. In terms of biological role, protein S19 forms a complex with S13 that binds strongly to the 16S ribosomal RNA. This is Small ribosomal subunit protein uS19c from Spirogyra maxima (Green alga).